The sequence spans 159 residues: ATP synthase subunit b (159 aa).

Residues 4–24 (VGINGTLIVQLVTFVILVALL) form a helical membrane-spanning segment.

This sequence belongs to the ATPase B chain family. In terms of assembly, F-type ATPases have 2 components, F(1) - the catalytic core - and F(0) - the membrane proton channel. F(1) has five subunits: alpha(3), beta(3), gamma(1), delta(1), epsilon(1). F(0) has three main subunits: a(1), b(2) and c(10-14). The alpha and beta chains form an alternating ring which encloses part of the gamma chain. F(1) is attached to F(0) by a central stalk formed by the gamma and epsilon chains, while a peripheral stalk is formed by the delta and b chains.

The protein resides in the cell inner membrane. F(1)F(0) ATP synthase produces ATP from ADP in the presence of a proton or sodium gradient. F-type ATPases consist of two structural domains, F(1) containing the extramembraneous catalytic core and F(0) containing the membrane proton channel, linked together by a central stalk and a peripheral stalk. During catalysis, ATP synthesis in the catalytic domain of F(1) is coupled via a rotary mechanism of the central stalk subunits to proton translocation. Functionally, component of the F(0) channel, it forms part of the peripheral stalk, linking F(1) to F(0). The polypeptide is ATP synthase subunit b (Acidithiobacillus ferridurans).